A 947-amino-acid polypeptide reads, in one-letter code: MSDTTPEKGSVDSVSPSASNGSNTNNPLNNSSPQPLKSNESDKKPKVTRRSVACKSCHSLKVKCTPSDPNNPSAPCVRCINANRICEIDLNQTRKRRKKSEILEAKRQAGQSLPEHKKEKNTPTQSGYNSSENYSSSINNANDSSLTSRYQSPMTFDPTSPMVFRPQASSAVPPISSNLNPQSAAPTPIPTSGIPPQLPSPHESAILRGNTTSPTSKDDEINQLKQRVRFLETELANKRLLANKKGFSNDSPTDLQSPPFVSKFDLESEISILAESSARLTDLTNQLNEAASRRIQLVSAKKPVDLISKGVITVAEAEERLKLYREQIYGRHPLIAIPDNMHAIEFSQSQPFLFNSIMSACNLITKNADKDVVLAIDNEAMTSVAVEVMVVGTKSVELVKAFSVLCLYYNSPELFKQRRYHMLNTICVSLLHDVGIFARPTYSYNQADGTLKQDASSKDKGNDEYRELVLITYFVTVSTCLVLRRSIYARWTPYVEECCSLLENSSQEKHRRLALFARMNNKLDKIHHIVHAPEMPGQKSGVSQYVIQELQRLLSDLKLKIKDNQYSLLSYYYSIEAYLHEPILTKVFKSDTELDGKAMKSIRYCTSSCLNALDEYSKLTPDQIALLPFPFGSRIMYTAGMLLRLRYLILSLPSHIDKELVPKRAVTSIQCVSKLVEQANILNPHNHYLTKMRLVLQLFIQTYATQVLELLSKNGNTPQNFKPDESETQQLRALAREYNDIRKVSKVSLVSDTRSAEPLDVLSYAATFRRENNDKPSAVAGSLRKSFSENDQAIKTPSQCGQFVSANNTPVPQVINSPPISQTNVPVLHQSQSIINGNNRNSAPLAFNNTTTPSLHQFGDVLPPSSMPQPDYRQFRLPSISNTVHYSSNPRLNANLANPDQLENSYQVLNDEFWSNLLSTDSTDRINFTSNNFNGNTSNDEVFFMNN.

The segment covering 1 to 10 has biased composition (basic and acidic residues); it reads MSDTTPEKGS. Residues 1–52 form a disordered region; sequence MSDTTPEKGSVDSVSPSASNGSNTNNPLNNSSPQPLKSNESDKKPKVTRRSV. Residues 19–38 are compositionally biased toward low complexity; sequence SNGSNTNNPLNNSSPQPLKS. Positions 54–86 form a DNA-binding region, zn(2)-C6 fungal-type; that stretch reads CKSCHSLKVKCTPSDPNNPSAPCVRCINANRIC. Positions 96–222 are disordered; sequence RRKKSEILEA…SPTSKDDEIN (127 aa). Positions 129–142 are enriched in low complexity; the sequence is NSSENYSSSINNAN. Composition is skewed to polar residues over residues 143-158 and 167-185; these read DSSL…TFDP and QASS…QSAA.

As to quaternary structure, homodimer.

Its subcellular location is the nucleus. In terms of biological role, transcription factor required for yeast cell adherence to silicone substrate. Plays a role in resistance to weak organic acids such as acetate and sorbate. Binds in vitro to a nitric oxide-responsive element (NORE) but seems not to be involved in response to nitrosative stress. The protein is Transcriptional regulator WAR1 (WAR1) of Candida albicans (strain SC5314 / ATCC MYA-2876) (Yeast).